We begin with the raw amino-acid sequence, 670 residues long: DNA ligase (670 aa).

Residues 36–40, 85–86, and Glu-116 contribute to the NAD(+) site; these read DAQYD and SL. Lys-118 serves as the catalytic N6-AMP-lysine intermediate. Residues Arg-139, Glu-174, Lys-290, and Lys-314 each contribute to the NAD(+) site. Zn(2+)-binding residues include Cys-408, Cys-411, Cys-426, and Cys-431. The BRCT domain maps to 591–670; sequence STDQTLSGKT…QDFVKLLQQQ (80 aa).

It belongs to the NAD-dependent DNA ligase family. LigA subfamily. Requires Mg(2+) as cofactor. It depends on Mn(2+) as a cofactor.

It catalyses the reaction NAD(+) + (deoxyribonucleotide)n-3'-hydroxyl + 5'-phospho-(deoxyribonucleotide)m = (deoxyribonucleotide)n+m + AMP + beta-nicotinamide D-nucleotide.. Functionally, DNA ligase that catalyzes the formation of phosphodiester linkages between 5'-phosphoryl and 3'-hydroxyl groups in double-stranded DNA using NAD as a coenzyme and as the energy source for the reaction. It is essential for DNA replication and repair of damaged DNA. The polypeptide is DNA ligase (Desulforamulus reducens (strain ATCC BAA-1160 / DSM 100696 / MI-1) (Desulfotomaculum reducens)).